Consider the following 455-residue polypeptide: Bifunctional protein GlmU (455 aa).

The tract at residues 1-228 (MTQPLHVIIL…AQEAEGANDP (228 aa)) is pyrophosphorylase. Residues 10–13 (LAAG), Lys24, Gln76, 81–82 (GT), 103–105 (YGD), Gly138, Glu153, Asn168, and Asn226 each bind UDP-N-acetyl-alpha-D-glucosamine. Asp105 serves as a coordination point for Mg(2+). Asn226 is a binding site for Mg(2+). A linker region spans residues 229–249 (WQLSQLERAWQRRAVRALCAQ). The N-acetyltransferase stretch occupies residues 250 to 455 (GARVRDPARL…DGWKRPLKKS (206 aa)). 2 residues coordinate UDP-N-acetyl-alpha-D-glucosamine: Arg332 and Lys350. His362 acts as the Proton acceptor in catalysis. Tyr365 and Asn376 together coordinate UDP-N-acetyl-alpha-D-glucosamine. Acetyl-CoA is bound by residues Ala379, 385-386 (NY), Ser404, Ala422, and Arg439.

In the N-terminal section; belongs to the N-acetylglucosamine-1-phosphate uridyltransferase family. The protein in the C-terminal section; belongs to the transferase hexapeptide repeat family. In terms of assembly, homotrimer. Mg(2+) is required as a cofactor.

It is found in the cytoplasm. The catalysed reaction is alpha-D-glucosamine 1-phosphate + acetyl-CoA = N-acetyl-alpha-D-glucosamine 1-phosphate + CoA + H(+). It carries out the reaction N-acetyl-alpha-D-glucosamine 1-phosphate + UTP + H(+) = UDP-N-acetyl-alpha-D-glucosamine + diphosphate. It participates in nucleotide-sugar biosynthesis; UDP-N-acetyl-alpha-D-glucosamine biosynthesis; N-acetyl-alpha-D-glucosamine 1-phosphate from alpha-D-glucosamine 6-phosphate (route II): step 2/2. The protein operates within nucleotide-sugar biosynthesis; UDP-N-acetyl-alpha-D-glucosamine biosynthesis; UDP-N-acetyl-alpha-D-glucosamine from N-acetyl-alpha-D-glucosamine 1-phosphate: step 1/1. Its pathway is bacterial outer membrane biogenesis; LPS lipid A biosynthesis. In terms of biological role, catalyzes the last two sequential reactions in the de novo biosynthetic pathway for UDP-N-acetylglucosamine (UDP-GlcNAc). The C-terminal domain catalyzes the transfer of acetyl group from acetyl coenzyme A to glucosamine-1-phosphate (GlcN-1-P) to produce N-acetylglucosamine-1-phosphate (GlcNAc-1-P), which is converted into UDP-GlcNAc by the transfer of uridine 5-monophosphate (from uridine 5-triphosphate), a reaction catalyzed by the N-terminal domain. The sequence is that of Bifunctional protein GlmU from Stenotrophomonas maltophilia (strain R551-3).